The sequence spans 443 residues: Thymidine phosphorylase (443 aa).

Belongs to the thymidine/pyrimidine-nucleoside phosphorylase family. As to quaternary structure, homodimer.

It catalyses the reaction thymidine + phosphate = 2-deoxy-alpha-D-ribose 1-phosphate + thymine. It functions in the pathway pyrimidine metabolism; dTMP biosynthesis via salvage pathway; dTMP from thymine: step 1/2. Functionally, the enzymes which catalyze the reversible phosphorolysis of pyrimidine nucleosides are involved in the degradation of these compounds and in their utilization as carbon and energy sources, or in the rescue of pyrimidine bases for nucleotide synthesis. The polypeptide is Thymidine phosphorylase (Shewanella baltica (strain OS185)).